Here is a 152-residue protein sequence, read N- to C-terminus: Deoxyuridine 5'-triphosphate nucleotidohydrolase (152 aa).

Residues 71–73 (RSG), asparagine 84, 88–90 (LID), and methionine 98 contribute to the substrate site.

Belongs to the dUTPase family. The cofactor is Mg(2+).

The catalysed reaction is dUTP + H2O = dUMP + diphosphate + H(+). It participates in pyrimidine metabolism; dUMP biosynthesis; dUMP from dCTP (dUTP route): step 2/2. Functionally, this enzyme is involved in nucleotide metabolism: it produces dUMP, the immediate precursor of thymidine nucleotides and it decreases the intracellular concentration of dUTP so that uracil cannot be incorporated into DNA. In Aeromonas hydrophila subsp. hydrophila (strain ATCC 7966 / DSM 30187 / BCRC 13018 / CCUG 14551 / JCM 1027 / KCTC 2358 / NCIMB 9240 / NCTC 8049), this protein is Deoxyuridine 5'-triphosphate nucleotidohydrolase.